A 388-amino-acid polypeptide reads, in one-letter code: (S)-8-oxocitronellyl enol synthase ISY1 (388 aa).

Residues 35 to 37 (TGI), 63 to 64 (RR), 81 to 82 (DV), 105 to 106 (TW), and glutamine 143 contribute to the NADP(+) site. Residues lysine 147 and tyrosine 178 contribute to the active site. NADP(+) contacts are provided by residues tyrosine 178, isoleucine 205, and 212–214 (SMM).

This sequence belongs to the short-chain dehydrogenases/reductases (SDR) family.

The catalysed reaction is (S)-8-oxocitronellyl enol + NADP(+) = (6E)-8-oxogeranial + NADPH + H(+). It carries out the reaction (S)-8-oxocitronellyl enol + NAD(+) = (6E)-8-oxogeranial + NADH + H(+). Its function is as follows. Iridoid synthase that catalyzes the first step in generation of the iridoid ring scaffold using the linear monoterpene (6E)-8-oxogeranial as substrate. Iridoids comprise a large family of distinctive bicyclic monoterpenes that possess a wide range of pharmacological activities, including anticancer, anti-inflammatory, antifungal and antibacterial activities. Catalyzes the conversion of the linear monoterpene (6E)-8-oxogeranial to (S)-8-oxocitronellyl enol, a precursor of nepetalactones, which are metabolites that are both insect-repellent and have euphoric effect in cats. The chain is (S)-8-oxocitronellyl enol synthase ISY1 from Nepeta cataria (Catnip).